A 398-amino-acid polypeptide reads, in one-letter code: Succinate--CoA ligase [ADP-forming] subunit beta (398 aa).

Residues 9–254 form the ATP-grasp domain; it reads KALLHEFGVP…ETEEDAKEIE (246 aa). Residues K46, 53–55, E109, S112, and E117 each bind ATP; that span reads GRG. The Mg(2+) site is built by N209 and D223. Residues N274 and 331-333 contribute to the substrate site; that span reads GIM.

This sequence belongs to the succinate/malate CoA ligase beta subunit family. As to quaternary structure, heterotetramer of two alpha and two beta subunits. The cofactor is Mg(2+).

It catalyses the reaction succinate + ATP + CoA = succinyl-CoA + ADP + phosphate. The catalysed reaction is GTP + succinate + CoA = succinyl-CoA + GDP + phosphate. The protein operates within carbohydrate metabolism; tricarboxylic acid cycle; succinate from succinyl-CoA (ligase route): step 1/1. Functionally, succinyl-CoA synthetase functions in the citric acid cycle (TCA), coupling the hydrolysis of succinyl-CoA to the synthesis of either ATP or GTP and thus represents the only step of substrate-level phosphorylation in the TCA. The beta subunit provides nucleotide specificity of the enzyme and binds the substrate succinate, while the binding sites for coenzyme A and phosphate are found in the alpha subunit. The polypeptide is Succinate--CoA ligase [ADP-forming] subunit beta (Bradyrhizobium sp. (strain ORS 278)).